A 300-amino-acid polypeptide reads, in one-letter code: Putative hydro-lyase Dshi_3152 (300 aa).

It belongs to the D-glutamate cyclase family.

The sequence is that of Putative hydro-lyase Dshi_3152 from Dinoroseobacter shibae (strain DSM 16493 / NCIMB 14021 / DFL 12).